Reading from the N-terminus, the 247-residue chain is Myeloid leukemia factor 2 (247 aa).

The tract at residues 122-247 (ETSEMRSAPG…PSRQSRRYDW (126 aa)) is disordered. Positions 134 to 144 (RETRRTVRDSD) are enriched in basic and acidic residues. Residues 154 to 169 (HHIRDRAHILQRSRNH) show a composition bias toward basic residues. Residues 170-179 (RTGDQEERQD) are compositionally biased toward basic and acidic residues. The span at 182–192 (NLDESEAAAFD) shows a compositional bias: acidic residues. The span at 193–225 (DEWRRETSRYRQQRPLEFRRHEASVGGGRRAEG) shows a compositional bias: basic and acidic residues. A phosphoserine mark is found at Ser216, Ser237, and Ser239.

Belongs to the MLF family.

It localises to the cytoplasm. The protein resides in the nucleus. The sequence is that of Myeloid leukemia factor 2 (Mlf2) from Mus musculus (Mouse).